The following is a 525-amino-acid chain: Glutamate--cysteine ligase (525 aa).

It belongs to the glutamate--cysteine ligase type 1 family. Type 1 subfamily.

It carries out the reaction L-cysteine + L-glutamate + ATP = gamma-L-glutamyl-L-cysteine + ADP + phosphate + H(+). It participates in sulfur metabolism; glutathione biosynthesis; glutathione from L-cysteine and L-glutamate: step 1/2. The chain is Glutamate--cysteine ligase from Pseudomonas putida (strain ATCC 47054 / DSM 6125 / CFBP 8728 / NCIMB 11950 / KT2440).